The sequence spans 522 residues: Transactivator/viroplasmin protein (522 aa).

A compositionally biased stretch (basic and acidic residues) spans 487–500 (KDASTDRGTTDKDG). Positions 487–522 (KDASTDRGTTDKDGPPPTRSIVEKEDVPTTSSKQVD) are disordered.

It belongs to the caulimoviridae viroplasmin family.

The protein resides in the host cytoplasm. In terms of biological role, enhances the ribosomal termination-reinitiation event leading to the translation of major open reading frames on the polycistronic viral RNAs. The chain is Transactivator/viroplasmin protein from Arabidopsis thaliana (Mouse-ear cress).